The chain runs to 287 residues: Cell division protein ZipA (287 aa).

A topological domain (periplasmic) is located at residue Met-1. Residues 2–22 (EIGLREWLIVIGIIVIAGILF) traverse the membrane as a helical segment. Residues 23–287 (DGWRRMRGSK…ERRALTQRRG (265 aa)) are Cytoplasmic-facing. Residues 48-140 (DEEETTSAEV…PTQRITEDKD (93 aa)) are disordered. Composition is skewed to basic and acidic residues over residues 64 to 77 (LDTH…EHDL), 85 to 104 (REGK…KDEP), and 121 to 140 (GRDD…EDKD).

The protein belongs to the ZipA family. As to quaternary structure, interacts with FtsZ via their C-terminal domains.

The protein localises to the cell inner membrane. Its function is as follows. Essential cell division protein that stabilizes the FtsZ protofilaments by cross-linking them and that serves as a cytoplasmic membrane anchor for the Z ring. Also required for the recruitment to the septal ring of downstream cell division proteins. The sequence is that of Cell division protein ZipA from Pseudomonas syringae pv. syringae (strain B728a).